A 276-amino-acid chain; its full sequence is Undecaprenyl-diphosphatase (276 aa).

6 helical membrane passes run 43–63 (RAMAFNIIIQLAAILAVVWEF), 85–105 (GNLLLAFMPAVVLGVLFADLI), 109–129 (LFNPITVATALVVGGVIMLWA), 183–203 (AATEFSFFLAMPTMVGAAVYS), 214–234 (ADLPVFAIGFVTSFIFAMIAV), and 249–269 (FAWYRIVFGLLILATWQFGWV).

This sequence belongs to the UppP family.

It localises to the cell inner membrane. The catalysed reaction is di-trans,octa-cis-undecaprenyl diphosphate + H2O = di-trans,octa-cis-undecaprenyl phosphate + phosphate + H(+). Functionally, catalyzes the dephosphorylation of undecaprenyl diphosphate (UPP). Confers resistance to bacitracin. The polypeptide is Undecaprenyl-diphosphatase (Pseudomonas putida (strain GB-1)).